The following is a 312-amino-acid chain: Beta-ketoacyl-[acyl-carrier-protein] synthase III (312 aa).

Catalysis depends on residues Cys112 and His237. Positions 238–242 are ACP-binding; that stretch reads QANIR. Residue Asn267 is part of the active site.

It belongs to the thiolase-like superfamily. FabH family. As to quaternary structure, homodimer.

Its subcellular location is the cytoplasm. The enzyme catalyses malonyl-[ACP] + acetyl-CoA + H(+) = 3-oxobutanoyl-[ACP] + CO2 + CoA. It participates in lipid metabolism; fatty acid biosynthesis. Functionally, catalyzes the condensation reaction of fatty acid synthesis by the addition to an acyl acceptor of two carbons from malonyl-ACP. Catalyzes the first condensation reaction which initiates fatty acid synthesis and may therefore play a role in governing the total rate of fatty acid production. Possesses both acetoacetyl-ACP synthase and acetyl transacylase activities. Its substrate specificity determines the biosynthesis of branched-chain and/or straight-chain of fatty acids. The chain is Beta-ketoacyl-[acyl-carrier-protein] synthase III from Bacillus pumilus (strain SAFR-032).